A 405-amino-acid polypeptide reads, in one-letter code: Tyrosine--tRNA ligase (405 aa).

Positions 41-50 (PTAPDLHLGH) match the 'HIGH' region motif. The short motif at 225–229 (KMSKS) is the 'KMSKS' region element. Lysine 228 is an ATP binding site. An S4 RNA-binding domain is found at 342–404 (EPLLVWVLSK…GKKGKFLKII (63 aa)).

The protein belongs to the class-I aminoacyl-tRNA synthetase family. TyrS type 2 subfamily. In terms of assembly, homodimer.

It is found in the cytoplasm. It catalyses the reaction tRNA(Tyr) + L-tyrosine + ATP = L-tyrosyl-tRNA(Tyr) + AMP + diphosphate + H(+). Catalyzes the attachment of tyrosine to tRNA(Tyr) in a two-step reaction: tyrosine is first activated by ATP to form Tyr-AMP and then transferred to the acceptor end of tRNA(Tyr). The protein is Tyrosine--tRNA ligase of Leptospira interrogans serogroup Icterohaemorrhagiae serovar Lai (strain 56601).